The primary structure comprises 524 residues: Probable beta-1,4-xylosyltransferase IRX14 (524 aa).

Topologically, residues 1–51 are cytoplasmic; that stretch reads MMKSLLPQSQLRRSAAAASAARSSGGGAGSGGADGAGSDGGAGGRAPATST. Positions 21-41 are disordered; sequence ARSSGGGAGSGGADGAGSDGG. Residues 24–41 show a composition bias toward gly residues; sequence SGGGAGSGGADGAGSDGG. Residues 52–71 form a helical; Signal-anchor for type II membrane protein membrane-spanning segment; that stretch reads FWFLLHALCCLVSLFLGFRF. Topologically, residues 72 to 524 are lumenal; the sequence is SRLLFFLLFS…SRSTTKRKEN (453 aa). N-linked (GlcNAc...) asparagine glycosylation is found at N132, N135, N240, and N353. The segment at 492–524 is disordered; it reads AELVDSKQDQEGRRLSRTDRSSRSRSTTKRKEN. A compositionally biased stretch (basic and acidic residues) spans 495–513; it reads VDSKQDQEGRRLSRTDRSS.

It belongs to the glycosyltransferase 43 family.

It localises to the golgi apparatus membrane. In terms of biological role, probable beta-1,4-xylosyltransferase involved in xylan biosynthesis in cell walls. In Oryza sativa subsp. japonica (Rice), this protein is Probable beta-1,4-xylosyltransferase IRX14.